The following is a 337-amino-acid chain: Glyceraldehyde-3-phosphate dehydrogenase 3, cytosolic (337 aa).

NAD(+) is bound by residues 13–14, Asp-35, and Arg-82; that span reads RI. D-glyceraldehyde 3-phosphate-binding positions include 153-155, Thr-184, 213-214, and Arg-236; these read SCT and TG. Catalysis depends on Cys-154, which acts as the Nucleophile. Asn-318 provides a ligand contact to NAD(+).

This sequence belongs to the glyceraldehyde-3-phosphate dehydrogenase family. In terms of assembly, homotetramer.

It localises to the cytoplasm. The catalysed reaction is D-glyceraldehyde 3-phosphate + phosphate + NAD(+) = (2R)-3-phospho-glyceroyl phosphate + NADH + H(+). Its pathway is carbohydrate degradation; glycolysis; pyruvate from D-glyceraldehyde 3-phosphate: step 1/5. In terms of biological role, key enzyme in glycolysis that catalyzes the first step of the pathway by converting D-glyceraldehyde 3-phosphate (G3P) into 3-phospho-D-glyceroyl phosphate. Essential for the maintenance of cellular ATP levels and carbohydrate metabolism. In Oryza sativa subsp. japonica (Rice), this protein is Glyceraldehyde-3-phosphate dehydrogenase 3, cytosolic (GAPC3).